The sequence spans 428 residues: FAD-dependent monooxygenase kojA (428 aa).

FAD contacts are provided by residues Arg-52 to Pro-60 and Ser-328 to Val-329.

It belongs to the aromatic-ring hydroxylase family. FAD serves as cofactor.

In terms of biological role, probable FAD-dependent monooxygenase; part of the gene cluster that mediates the biosynthesis of 5-hydroxy-2-hydroxymethyl-1,4-pyrone, also know as kojic acid, a by-product in the fermentation process of malting rice that acts as a chelation agent. Glucose might be converted to kojic acid by a combination of dehydrogenase and dehydratase reactions involving kojA and probably additional enzymes. The polypeptide is FAD-dependent monooxygenase kojA (Aspergillus flavus (strain ATCC 200026 / FGSC A1120 / IAM 13836 / NRRL 3357 / JCM 12722 / SRRC 167)).